Consider the following 329-residue polypeptide: NTD biosynthesis operon regulator NtdR (329 aa).

Residues 2 to 56 (PTIDEIAKLCNVSKTTVSRVLNNHPYVSKEKRDMILKAINELDYTPNYLARNFRR) enclose the HTH lacI-type domain. Positions 4–23 (IDEIAKLCNVSKTTVSRVLN) form a DNA-binding region, H-T-H motif.

In terms of biological role, positively regulates the ntdABC operon and negatively regulates its own transcription. Binds to NTD to induce ntdABC transcription. In Bacillus subtilis (strain 168), this protein is NTD biosynthesis operon regulator NtdR (ntdR).